Here is a 163-residue protein sequence, read N- to C-terminus: Urease accessory protein UreE (163 aa).

Belongs to the UreE family.

The protein resides in the cytoplasm. Involved in urease metallocenter assembly. Binds nickel. Probably functions as a nickel donor during metallocenter assembly. This chain is Urease accessory protein UreE, found in Actinomyces naeslundii.